We begin with the raw amino-acid sequence, 32 residues long: Calichemicin antitumor antibiotic biosynthesis protein (32 aa).

This chain is Calichemicin antitumor antibiotic biosynthesis protein, found in Micromonospora echinospora (Micromonospora purpurea).